A 207-amino-acid polypeptide reads, in one-letter code: Claudin-11 (207 aa).

M1 is a topological domain (cytoplasmic). The helical transmembrane segment at 2-22 (VATCLQVVGFVTSFVGWIGVI) threads the bilayer. Topologically, residues 23 to 82 (VTTSTNDWVVTCGYTIPTCRKLDELGSKGLWADCVMATGLYHCKPLVDILILPGYVQACR) are extracellular. A helical membrane pass occupies residues 83-103 (ALMIAASVLGLPAILLLLTVL). At 104–122 (PCIRMGHEPGVAKYRRAQL) the chain is on the cytoplasmic side. The helical transmembrane segment at 123–143 (AGVLLILLALCAIVATIWFPV) threads the bilayer. Residues 144-157 (CAHRETTIVSFGYS) lie on the Extracellular side of the membrane. Residues 158 to 178 (LYAGWIGAVLCLVGGCVILCC) form a helical membrane-spanning segment. The Cytoplasmic segment spans residues 179–207 (AGDAQAFGENRFYYSSGSSSPTHAKSAHV). Phosphoserine occurs at positions 193, 194, 197, and 198.

This sequence belongs to the claudin family. In terms of assembly, interacts with tetraspanin-3/TSPAN3. Interacts with OCLN.

It is found in the cell junction. It localises to the tight junction. The protein resides in the cell membrane. Plays a major role in tight junction-specific obliteration of the intercellular space, through calcium-independent cell-adhesion activity. This chain is Claudin-11 (CLDN11), found in Macaca fascicularis (Crab-eating macaque).